Reading from the N-terminus, the 358-residue chain is tRNA-specific 2-thiouridylase MnmA (358 aa).

ATP is bound by residues 7 to 14 (AMSGGVDS) and Met-33. The Nucleophile role is filled by Cys-102. A disulfide bridge connects residues Cys-102 and Cys-199. Gly-126 serves as a coordination point for ATP. The interaction with tRNA stretch occupies residues 149–151 (KDQ). Cys-199 acts as the Cysteine persulfide intermediate in catalysis. The interval 305-306 (RY) is interaction with tRNA.

Belongs to the MnmA/TRMU family.

It is found in the cytoplasm. The catalysed reaction is S-sulfanyl-L-cysteinyl-[protein] + uridine(34) in tRNA + AH2 + ATP = 2-thiouridine(34) in tRNA + L-cysteinyl-[protein] + A + AMP + diphosphate + H(+). Its function is as follows. Catalyzes the 2-thiolation of uridine at the wobble position (U34) of tRNA, leading to the formation of s(2)U34. This Halothermothrix orenii (strain H 168 / OCM 544 / DSM 9562) protein is tRNA-specific 2-thiouridylase MnmA.